The sequence spans 53 residues: Conotoxin Cal6.23 (53 aa).

The N-terminal stretch at 1-22 is a signal peptide; it reads MKLTAVLMVAVLVLTACQLITA. Disulfide bonds link C25–C40, C32–C47, and C39–C51.

The protein belongs to the conotoxin O1 superfamily. Expressed by the venom duct.

The protein localises to the secreted. In terms of biological role, probable neurotoxin. This chain is Conotoxin Cal6.23, found in Californiconus californicus (California cone).